The following is a 495-amino-acid chain: Neuronal acetylcholine receptor subunit beta-4 (495 aa).

The first 20 residues, 1–20 (MRGTPLLLVSLFSLLQDGDC), serve as a signal peptide directing secretion. Topologically, residues 21-235 (RLANAEEKLM…IIKRKPLFYT (215 aa)) are extracellular. N35, N92, N137, and N165 each carry an N-linked (GlcNAc...) asparagine glycan. C152 and C166 are oxidised to a cystine. A helical transmembrane segment spans residues 236–256 (INLIIPCVLITSLAILVFYLP). Residues 257–264 (SDCGEKMT) are Cytoplasmic-facing. E261 contacts Na(+). The helical transmembrane segment at 265-285 (LCISVLLALTFFLLLISKIVP) threads the bilayer. The Extracellular portion of the chain corresponds to 286-297 (PTSLDIPLIGKY). A helical transmembrane segment spans residues 298 to 318 (LLFTMVLVTFSIVTTVCVLNV). Residues 319–463 (HHRSPSTHTM…WKFVAMVVDR (145 aa)) lie on the Cytoplasmic side of the membrane. Residues 464–484 (LFLWVFVFVCILGTMGLFLPP) form a helical membrane-spanning segment. At 485–495 (LFQIHAPSKDS) the chain is on the extracellular side.

It belongs to the ligand-gated ion channel (TC 1.A.9) family. Acetylcholine receptor (TC 1.A.9.1) subfamily. Beta-4/CHRNB4 sub-subfamily. In terms of assembly, neuronal AChR is composed of two different types of subunits: alpha and beta. CHRNB4/Beta-4 subunit can be combined to CHRNA2/alpha-2, CHRNA3/alpha-3 or CHRNA4/alpha-4, CHRNA5/alpha-5 and CHRNB3/beta-3 to give rise to functional receptors. Forms stoichiometries such as (CHRNA3)2:(CHRNB4)3 or (CHRNA3:CHRNB4)2:CHRNB3. Interacts with RIC3; which is required for proper folding and assembly. Interacts with LYPD6. In the brain, it is detected in the medial habenula. In the peripheral nervous system, it is found at least in the adrenal gland.

The protein localises to the synaptic cell membrane. It localises to the cell membrane. It carries out the reaction Ca(2+)(in) = Ca(2+)(out). It catalyses the reaction K(+)(in) = K(+)(out). The enzyme catalyses Na(+)(in) = Na(+)(out). With respect to regulation, activated by a myriad of ligands such as acetylcholine, cytisine, nicotine, choline and epibatidine. nAChR activity is inhibited by the antagonist alpha-conotoxins BuIA and MII, small disulfide-constrained peptides from cone snails. The heteropentamer CHRNA3:CHRNB4 activity is blocked by the alpha-conotoxin ImI and AuIB. In terms of biological role, component of neuronal acetylcholine receptors (nAChRs) that function as pentameric, ligand-gated cation channels with high calcium permeability among other activities. nAChRs are excitatory neurotrasnmitter receptors formed by a collection of nAChR subunits known to mediate synaptic transmission in the nervous system and the neuromuscular junction. Each nAchR subunit confers differential attributes to channel properties, including activation, deactivation and desensitization kinetics, pH sensitivity, cation permeability, and binding to allosteric modulators. CHRNB4 forms heteropentameric neuronal acetylcholine receptors with CHRNA2, CHRNA3 and CHRNA4, as well as CHRNA5 and CHRNB3 as accesory subunits. CHRNA3:CHRNB4 being predominant in neurons of the autonomic ganglia, it is known as ganglionic nicotinic receptor. CHRNA3:CHRNB4 or CHRNA3:CHRNA5:CHRNB4 play also an important role in the habenulo-interpeduncular tract, modulating the mesolimbic dopamine system and affecting reward circuits and addiction. Hypothalamic CHRNA3:CHRNB4 nAChR activation by nicotine leads to activation of POMC neurons and a decrease in food intake. This Rattus norvegicus (Rat) protein is Neuronal acetylcholine receptor subunit beta-4 (Chrnb4).